The following is a 305-amino-acid chain: Cysteine synthase (305 aa).

The residue at position 45 (Lys-45) is an N6-(pyridoxal phosphate)lysine. Pyridoxal 5'-phosphate contacts are provided by residues Asn-75, 179–183, and Ser-266; that span reads GSGGT.

The protein belongs to the cysteine synthase/cystathionine beta-synthase family. In terms of assembly, homodimer. The cofactor is pyridoxal 5'-phosphate.

It catalyses the reaction O-acetyl-L-serine + hydrogen sulfide = L-cysteine + acetate. Its pathway is amino-acid biosynthesis; L-cysteine biosynthesis; L-cysteine from L-serine: step 2/2. The polypeptide is Cysteine synthase (cysM) (Helicobacter pylori (strain J99 / ATCC 700824) (Campylobacter pylori J99)).